A 2968-amino-acid chain; its full sequence is Trinucleotide repeat-containing gene 18 protein (2968 aa).

Disordered stretches follow at residues 1–24 (MDGR…SGLA) and 139–261 (GSPL…LAER). Residues 139 to 150 (GSPLLSQLGQPS) show a composition bias toward low complexity. Basic and acidic residues-rich tracts occupy residues 221-233 (GKKD…EEAS) and 243-260 (QEAR…RLAE). Ser-263 carries the phosphoserine modification. Over residues 304-322 (GAKEAARQDEGARLLRRTE) the composition is skewed to basic and acidic residues. 2 disordered regions span residues 304-356 (GAKE…PAGV) and 381-488 (FDER…PAAQ). A compositionally biased stretch (pro residues) spans 327-351 (GPRPCPSPLPPPPAPPKGPPAPPAA). Basic and acidic residues-rich tracts occupy residues 395 to 405 (RDARAREREAG), 419 to 431 (PLDR…EKNS), and 464 to 479 (ELLK…ERAP). Residue Ser-611 is modified to Phosphoserine. 8 disordered regions span residues 612–679 (PFGG…EVRH), 941–1002 (EHRA…SPVA), 1019–1055 (PAYA…PENV), 1106–1190 (DADG…MATP), 1212–1236 (SCAE…PGRT), 1279–1306 (LAQV…GQCP), 1497–1566 (KQRE…SDDY), and 1687–1855 (SLKS…RERA). Residue Lys-620 forms a Glycyl lysine isopeptide (Lys-Gly) (interchain with G-Cter in SUMO2) linkage. Composition is skewed to basic and acidic residues over residues 651–660 (LKRDPERPES) and 941–955 (EHRA…KRGL). Positions 916 to 949 (LQQQAAQALELQRSAQLVQERLKAQEHRAEMEEK) form a coiled coil. Composition is skewed to low complexity over residues 966–983 (AGPG…AGPA) and 1019–1031 (PAYA…SSHP). Pro residues predominate over residues 1032 to 1043 (TSPPPASPPPTP). Residues 1046–1055 (TRKEEAPENV) are compositionally biased toward basic and acidic residues. A phosphoserine mark is found at Ser-1127 and Ser-1136. A compositionally biased stretch (basic and acidic residues) spans 1142–1162 (EPLREGPEEEPLAEREVKAEV). Positions 1171–1181 (ELPPLESPLPL) are enriched in pro residues. Positions 1481 to 1516 (LDFRMRLAEVQRQYKEKQRELVKLQRRRDSEDRREE) form a coiled coil. Residues 1497-1519 (KQRELVKLQRRRDSEDRREEPHR) are compositionally biased toward basic and acidic residues. Basic residues predominate over residues 1520–1534 (SLARRGPGRPRKRTH). A Phosphoserine modification is found at Ser-1540. Residues 1549 to 1563 (GHSSGKLSSKSLLTS) show a composition bias toward low complexity. The segment covering 1816 to 1842 (SSEESFDQDESSEEEDEEEELEEEDEA) has biased composition (acidic residues). 2 positions are modified to phosphoserine: Ser-1857 and Ser-1863. Disordered regions lie at residues 1912 to 2148 (YTDS…LTPA) and 2295 to 2771 (LLVP…RLPS). Composition is skewed to basic and acidic residues over residues 1957-1968 (SPDKAKLAVEKG) and 1993-2004 (LWTRRRSERIFL). Low complexity predominate over residues 2007-2024 (ASAAAPAPVSTAPATKTS). The span at 2034–2046 (PRKDAGRAKDRKD) shows a compositional bias: basic and acidic residues. A compositionally biased stretch (low complexity) spans 2069-2085 (ALPSEARAPHASSLTAA). The span at 2093 to 2103 (KGKEVKKENRG) shows a compositional bias: basic and acidic residues. A Phosphothreonine modification is found at Thr-2146. Over residues 2307 to 2316 (TSKDTGEGKD) the composition is skewed to basic and acidic residues. Positions 2329-2338 (ARGRGRKPSA) are enriched in basic residues. A compositionally biased stretch (low complexity) spans 2365–2374 (EPSSTPGSKK). Basic and acidic residues predominate over residues 2375 to 2384 (SPPEPVDKRA). A compositionally biased stretch (pro residues) spans 2390–2401 (RPAPPQPSPAPP). Residues 2411-2433 (PFAELPAPATSLAPAPLITMPAT) are compositionally biased toward low complexity. Composition is skewed to basic and acidic residues over residues 2441–2468 (RAAE…DHEG) and 2477–2487 (AKEALLLREDP). Composition is skewed to low complexity over residues 2559-2580 (SSSS…SGSE) and 2603-2671 (SAAS…SSSS). Acidic residues predominate over residues 2673–2685 (TDEDSSCSSDDEA). Positions 2723–2736 (APQPQAPPPQPTQP) are enriched in pro residues. Ser-2771 carries the phosphoserine modification. The 146-residue stretch at 2817–2962 (EMIRIGDCAV…PTTGMIFSTD (146 aa)) folds into the BAH domain.

The chain is Trinucleotide repeat-containing gene 18 protein from Homo sapiens (Human).